The chain runs to 602 residues: Glutamyl-tRNA(Gln) amidotransferase subunit B, mitochondrial (602 aa).

The protein belongs to the GatB/GatE family. GatB subfamily. In terms of assembly, subunit of the heterotrimeric GatCAB amidotransferase (AdT) complex, composed of A, B and C subunits.

Its subcellular location is the mitochondrion. It catalyses the reaction L-glutamyl-tRNA(Gln) + L-glutamine + ATP + H2O = L-glutaminyl-tRNA(Gln) + L-glutamate + ADP + phosphate + H(+). Functionally, allows the formation of correctly charged Gln-tRNA(Gln) through the transamidation of misacylated Glu-tRNA(Gln) in the mitochondria. The reaction takes place in the presence of glutamine and ATP through an activated gamma-phospho-Glu-tRNA(Gln). This Paracoccidioides lutzii (strain ATCC MYA-826 / Pb01) (Paracoccidioides brasiliensis) protein is Glutamyl-tRNA(Gln) amidotransferase subunit B, mitochondrial.